The sequence spans 128 residues: Glycoprotein hormone alpha-2 (128 aa).

Residues 1–20 (MPMAPRVLLLCLLGLAVTEG) form the signal peptide. 4 cysteine pairs are disulfide-bonded: cysteine 30-cysteine 88, cysteine 47-cysteine 102, cysteine 56-cysteine 118, and cysteine 60-cysteine 120. Asparagine 36 and asparagine 80 each carry an N-linked (GlcNAc...) asparagine glycan.

The protein belongs to the glycoprotein hormones subunit alpha family. In terms of assembly, heterodimer with GPHB5; this heterodimer interacts with thyroid-stimulating hormone receptor (TSHR), and hence stimulates cAMP production.

It localises to the secreted. Functionally, functions as a heterodimeric glycoprotein hormone with GPHB5 able to bind and activate the thyroid-stimulating hormone receptor (TSHR), leading to increased cAMP production. Plays a central role in controlling thyroid cell metabolism. In Mus musculus (Mouse), this protein is Glycoprotein hormone alpha-2 (Gpha2).